The sequence spans 229 residues: Transmembrane emp24 domain-containing protein 5 (229 aa).

Positions 1-27 are cleaved as a signal peptide; it reads MGGRMWLPFPVLLLSALPAALLRGAAG. Over 28-196 the chain is Lumenal; the sequence is FTPSLDSDFT…IQESNFDRVN (169 aa). A GOLD domain is found at 45-126; sequence KECFYQPMPL…EKVIFFELIL (82 aa). The helical transmembrane segment at 197 to 217 threads the bilayer; it reads FWSVVNLMVMVVVSAIQVYTL. Over 218-229 the chain is Cytoplasmic; the sequence is KSLFEDKRKSRT.

The protein belongs to the EMP24/GP25L family. As to quaternary structure, interacts with TMED9 and TMED10.

It localises to the endoplasmic reticulum membrane. The protein localises to the golgi apparatus. The protein resides in the cis-Golgi network membrane. Its subcellular location is the endoplasmic reticulum-Golgi intermediate compartment membrane. Functionally, potential role in vesicular protein trafficking, mainly in the early secretory pathway. Required for the maintenance of the Golgi apparatus; involved in protein exchange between Golgi stacks during assembly. Probably not required for COPI-vesicle-mediated retrograde transport. This chain is Transmembrane emp24 domain-containing protein 5 (Tmed5), found in Mus musculus (Mouse).